The primary structure comprises 119 residues: Holo-[acyl-carrier-protein] synthase (119 aa).

Mg(2+) is bound by residues aspartate 8 and glutamate 58.

The protein belongs to the P-Pant transferase superfamily. AcpS family. The cofactor is Mg(2+).

It localises to the cytoplasm. It carries out the reaction apo-[ACP] + CoA = holo-[ACP] + adenosine 3',5'-bisphosphate + H(+). Its function is as follows. Transfers the 4'-phosphopantetheine moiety from coenzyme A to a Ser of acyl-carrier-protein. The sequence is that of Holo-[acyl-carrier-protein] synthase from Streptococcus mutans serotype c (strain ATCC 700610 / UA159).